We begin with the raw amino-acid sequence, 307 residues long: Elongation factor Ts (307 aa).

Positions 82-85 (TDFV) are involved in Mg(2+) ion dislocation from EF-Tu.

Belongs to the EF-Ts family.

The protein localises to the cytoplasm. Functionally, associates with the EF-Tu.GDP complex and induces the exchange of GDP to GTP. It remains bound to the aminoacyl-tRNA.EF-Tu.GTP complex up to the GTP hydrolysis stage on the ribosome. In Nautilia profundicola (strain ATCC BAA-1463 / DSM 18972 / AmH), this protein is Elongation factor Ts.